The chain runs to 585 residues: Parathyroid hormone/parathyroid hormone-related peptide receptor (585 aa).

The signal sequence occupies residues Met-1–Val-26. Residues Asp-27–Gly-184 are Extracellular-facing. 3 cysteine pairs are disulfide-bonded: Cys-48/Cys-113, Cys-104/Cys-144, and Cys-127/Cys-166. The disordered stretch occupies residues Asp-66–Gln-100. Residues Asn-147, Asn-157, Asn-162, and Asn-172 are each glycosylated (N-linked (GlcNAc...) asparagine). A helical transmembrane segment spans residues Met-185–Phe-208. The Cytoplasmic segment spans residues Arg-209 to Arg-215. A helical membrane pass occupies residues Asn-216–Val-235. The Extracellular segment spans residues Lys-236–Arg-277. Residues Val-278–Leu-301 traverse the membrane as a helical segment. Residues His-302–Tyr-315 lie on the Cytoplasmic side of the membrane. Residues Leu-316–Val-337 traverse the membrane as a helical segment. Residues Arg-338–Trp-356 lie on the Extracellular side of the membrane. The helical transmembrane segment at Ile-357–Val-377 threads the bilayer. Residues Arg-378–Ser-404 lie on the Cytoplasmic side of the membrane. A helical membrane pass occupies residues Thr-405–Pro-423. Topologically, residues Tyr-424–Gln-435 are extracellular. Residues Met-436 to Asn-458 traverse the membrane as a helical segment. Topologically, residues Gly-459–Met-585 are cytoplasmic. Positions Trp-469–Trp-472 match the Important for interaction with G proteins motif. Thr-543 carries the phosphothreonine modification.

Belongs to the G-protein coupled receptor 2 family. In terms of assembly, homodimer in the absence of bound ligand. Peptide hormone binding leads to dissociation of the homodimer. Post-translationally, N-glycosylated.

It is found in the cell membrane. G-protein-coupled receptor for parathyroid hormone (PTH) and for parathyroid hormone-related peptide (PTHLH). Ligand binding causes a conformation change that triggers signaling via guanine nucleotide-binding proteins (G proteins) and modulates the activity of downstream effectors, such as adenylate cyclase (cAMP). PTH1R is coupled to G(s) G alpha proteins and mediates activation of adenylate cyclase activity. PTHLH dissociates from PTH1R more rapidly than PTH; as consequence, the cAMP response induced by PTHLH decays faster than the response induced by PTH. The polypeptide is Parathyroid hormone/parathyroid hormone-related peptide receptor (PTH1R) (Sus scrofa (Pig)).